A 46-amino-acid polypeptide reads, in one-letter code: uncharacterized protein (46 aa).

This is an uncharacterized protein from Acidianus sp. F28 (AFV-2).